A 445-amino-acid polypeptide reads, in one-letter code: Probable glycine dehydrogenase (decarboxylating) subunit 1 (445 aa).

It belongs to the GcvP family. N-terminal subunit subfamily. The glycine cleavage system is composed of four proteins: P, T, L and H. In this organism, the P 'protein' is a heterodimer of two subunits.

It carries out the reaction N(6)-[(R)-lipoyl]-L-lysyl-[glycine-cleavage complex H protein] + glycine + H(+) = N(6)-[(R)-S(8)-aminomethyldihydrolipoyl]-L-lysyl-[glycine-cleavage complex H protein] + CO2. The glycine cleavage system catalyzes the degradation of glycine. The P protein binds the alpha-amino group of glycine through its pyridoxal phosphate cofactor; CO(2) is released and the remaining methylamine moiety is then transferred to the lipoamide cofactor of the H protein. In Anaeromyxobacter sp. (strain Fw109-5), this protein is Probable glycine dehydrogenase (decarboxylating) subunit 1.